A 105-amino-acid chain; its full sequence is Large ribosomal subunit protein uL24 (105 aa).

It belongs to the universal ribosomal protein uL24 family. Part of the 50S ribosomal subunit.

One of two assembly initiator proteins, it binds directly to the 5'-end of the 23S rRNA, where it nucleates assembly of the 50S subunit. Its function is as follows. One of the proteins that surrounds the polypeptide exit tunnel on the outside of the subunit. This Clostridium kluyveri (strain ATCC 8527 / DSM 555 / NBRC 12016 / NCIMB 10680 / K1) protein is Large ribosomal subunit protein uL24.